The primary structure comprises 304 residues: UTP--glucose-1-phosphate uridylyltransferase 1 (304 aa).

Belongs to the UDPGP type 2 family.

It catalyses the reaction alpha-D-glucose 1-phosphate + UTP + H(+) = UDP-alpha-D-glucose + diphosphate. The protein operates within carbohydrate metabolism; nucleotide-sugar metabolism. This is UTP--glucose-1-phosphate uridylyltransferase 1 (hasC1) from Streptococcus pyogenes serotype M1.